A 264-amino-acid chain; its full sequence is tRNA pseudouridine synthase A (264 aa).

The Nucleophile role is filled by D51. Y109 lines the substrate pocket.

The protein belongs to the tRNA pseudouridine synthase TruA family. Homodimer.

It catalyses the reaction uridine(38/39/40) in tRNA = pseudouridine(38/39/40) in tRNA. Formation of pseudouridine at positions 38, 39 and 40 in the anticodon stem and loop of transfer RNAs. The polypeptide is tRNA pseudouridine synthase A (Vibrio parahaemolyticus serotype O3:K6 (strain RIMD 2210633)).